Here is a 360-residue protein sequence, read N- to C-terminus: MSQSAVSFQISPVSKTQDPLIQQKIDLKTKPPGALGQLESLALQIARVQATDSQQTDQPQNTVLKIVHPTMLVFAGDHGIAAEGVSIAPSEVTRQMVQNFAHGGAAINVFCRQVGFTLEVIDCGILTPVEGVEGIIDQRLGAGTGAIHLEPAMALETVDKGFAMARDLIERHHQAGCNLVAFGEMGIGNTSAAAAIMAAIMQLDVIDCVGRGTGINSETLERKLMLIELALLLHQSALTGPKSVLACLGGFEIVQMTGAMLAAAERKMLVVVDGFIATAAALVAVQIAPNVRDYLIFAHQSDEQGHQRMLEFLQAKPLLSLGLRLGEGTGAALALPLIQASVNFYNQMASFSDAGIEAVV.

Glu-327 functions as the Proton acceptor in the catalytic mechanism.

This sequence belongs to the CobT family.

It catalyses the reaction 5,6-dimethylbenzimidazole + nicotinate beta-D-ribonucleotide = alpha-ribazole 5'-phosphate + nicotinate + H(+). The protein operates within nucleoside biosynthesis; alpha-ribazole biosynthesis; alpha-ribazole from 5,6-dimethylbenzimidazole: step 1/2. Functionally, catalyzes the synthesis of alpha-ribazole-5'-phosphate from nicotinate mononucleotide (NAMN) and 5,6-dimethylbenzimidazole (DMB). The chain is Nicotinate-nucleotide--dimethylbenzimidazole phosphoribosyltransferase from Shewanella baltica (strain OS223).